We begin with the raw amino-acid sequence, 339 residues long: Ornithine carbamoyltransferase (339 aa).

Carbamoyl phosphate-binding positions include 56 to 59, Arg-107, and 134 to 137; these read STRT and HPTQ. L-ornithine is bound by residues Asn-168, Asp-232, and 236 to 237; that span reads SM. Residues 274–275 and Arg-320 each bind carbamoyl phosphate; that span reads CL.

The protein belongs to the aspartate/ornithine carbamoyltransferase superfamily. OTCase family.

It localises to the cytoplasm. It carries out the reaction carbamoyl phosphate + L-ornithine = L-citrulline + phosphate + H(+). The protein operates within amino-acid biosynthesis; L-arginine biosynthesis; L-arginine from L-ornithine and carbamoyl phosphate: step 1/3. Its function is as follows. Reversibly catalyzes the transfer of the carbamoyl group from carbamoyl phosphate (CP) to the N(epsilon) atom of ornithine (ORN) to produce L-citrulline. This Buchnera aphidicola subsp. Baizongia pistaciae (strain Bp) protein is Ornithine carbamoyltransferase.